Reading from the N-terminus, the 211-residue chain is Uridine kinase (211 aa).

An ATP-binding site is contributed by 13–20 (GGSGSGKT).

Belongs to the uridine kinase family.

The protein localises to the cytoplasm. The catalysed reaction is uridine + ATP = UMP + ADP + H(+). The enzyme catalyses cytidine + ATP = CMP + ADP + H(+). The protein operates within pyrimidine metabolism; CTP biosynthesis via salvage pathway; CTP from cytidine: step 1/3. Its pathway is pyrimidine metabolism; UMP biosynthesis via salvage pathway; UMP from uridine: step 1/1. This is Uridine kinase from Lactobacillus johnsonii (strain CNCM I-12250 / La1 / NCC 533).